The sequence spans 77 residues: MAADKQNLQDAFLNHVRKAKVPVTIFLINGVKLQGVITWFDNFCVLLRRDGQSQLVYKHAISTIMPGQPINLYEGDD.

The region spanning 10-70 (DAFLNHVRKA…ISTIMPGQPI (61 aa)) is the Sm domain.

This sequence belongs to the Hfq family. In terms of assembly, homohexamer.

Functionally, RNA chaperone that binds small regulatory RNA (sRNAs) and mRNAs to facilitate mRNA translational regulation in response to envelope stress, environmental stress and changes in metabolite concentrations. Also binds with high specificity to tRNAs. The sequence is that of RNA-binding protein Hfq from Cereibacter sphaeroides (strain ATCC 17029 / ATH 2.4.9) (Rhodobacter sphaeroides).